An 893-amino-acid chain; its full sequence is Major vault protein (893 aa).

A2 bears the N-acetylalanine mark. MVP repeat units follow at residues 2–56 (ATEE…VPPR), 57–111 (HYCT…DITP), 112–164 (LQVV…EIIQ), 165–217 (ATII…DLVD), 218–272 (AVIL…GVVP), 273–323 (ITTL…IQDV), 324–379 (YVLS…ERQA), 380–457 (IPLD…KTRV), and 458–520 (VSYR…LLGP). K444 is covalently cross-linked (Glycyl lysine isopeptide (Lys-Gly) (interchain with G-Cter in SUMO2)). A Phosphoserine modification is found at S445. Residue K704 forms a Glycyl lysine isopeptide (Lys-Gly) (interchain with G-Cter in SUMO2) linkage. The segment at 856-893 (QPLGRRVASGPSPGEGISPQSAQAPQAPGDNHVVPVLR) is disordered.

The vault ribonucleoprotein particle is a huge (400 A x 670 A) cage structure of 12.9 MDa. It consists of a dimer of half-vaults, with each half-vault comprising 39 identical major vault protein (MVP) chains, PARP4 and one or more vault RNAs (vRNAs). Interacts with TEP1. Interacts with PTEN and activated MAPK1. The phosphorylated protein interacts with the SH2 domains of PTPN11 and SRC. Interacts with APEX1. May interact with ZNF540. Post-translationally, phosphorylated on Tyr residues after EGF stimulation. Dephosphorylated by PTPN11.

Its subcellular location is the cytoplasm. It is found in the nucleus. In terms of biological role, required for normal vault structure. Vaults are multi-subunit structures that may act as scaffolds for proteins involved in signal transduction. Vaults may also play a role in nucleo-cytoplasmic transport. Down-regulates IFNG-mediated STAT1 signaling and subsequent activation of JAK. Down-regulates SRC activity and signaling through MAP kinases. The polypeptide is Major vault protein (MVP) (Pongo abelii (Sumatran orangutan)).